The chain runs to 471 residues: SVGFKAGVKDYKLTYYTPEYQPQDTDILAAFRVTPQPGVPSEEAGAAVAAESSTGTWTTVWTDGLTSLDRYKGRCYHIDAVPGEDNQYICYVAYPLDLFEEGSVTNMFTSIVGNVFGFKALRALRLEDLRIPVAYIKTFQGPPHGIQVERDKLNKYGRPLLGCTIKPKLGLSAKNYGRAVYECLRGGLDFTKDDENVNSQPFMRWRDRFLFCAEAIYKAQAETGEIKGHYLNATAGTCEEMIKRAVFARELGVPIVMHDYLTGGFTANTSLALYCRDNGLLLHIHRAMHAVIDRQKNHGMHFRVLAKALRLSGGDHIHAGTVVGKLEGERDITLGFVDLLRDDYTEIDANRGIYFTQSWVSTPGVLPVASGGIHVWHMPALTEIFGDDSVLQFGGGTLGHPWGNAPGAVANRVALEACVQARNEGRDLARQGATIIRNASKWSPELAAACEVWKEIKFEFPAVDTLDKKKG.

At K5 the chain carries N6,N6,N6-trimethyllysine. Substrate contacts are provided by N114 and T164. K166 serves as the catalytic Proton acceptor. Substrate is bound at residue K168. Residues K192, D194, and E195 each coordinate Mg(2+). K192 is subject to N6-carboxylysine. The active-site Proton acceptor is H285. The substrate site is built by R286, H318, and S370.

This sequence belongs to the RuBisCO large chain family. Type I subfamily. Heterohexadecamer of 8 large chains and 8 small chains; disulfide-linked. The disulfide link is formed within the large subunit homodimers. Mg(2+) is required as a cofactor. The disulfide bond which can form in the large chain dimeric partners within the hexadecamer appears to be associated with oxidative stress and protein turnover.

The protein resides in the plastid. Its subcellular location is the chloroplast. The enzyme catalyses 2 (2R)-3-phosphoglycerate + 2 H(+) = D-ribulose 1,5-bisphosphate + CO2 + H2O. It catalyses the reaction D-ribulose 1,5-bisphosphate + O2 = 2-phosphoglycolate + (2R)-3-phosphoglycerate + 2 H(+). RuBisCO catalyzes two reactions: the carboxylation of D-ribulose 1,5-bisphosphate, the primary event in carbon dioxide fixation, as well as the oxidative fragmentation of the pentose substrate in the photorespiration process. Both reactions occur simultaneously and in competition at the same active site. In Schlumbergera truncata (Thanksgiving cactus), this protein is Ribulose bisphosphate carboxylase large chain.